The following is a 725-amino-acid chain: Calcium-responsive transcription factor (725 aa).

Residues 572-592 (TSPDESPAVVSVNNQPSSSPS) are disordered. The span at 577–592 (SPAVVSVNNQPSSSPS) shows a compositional bias: low complexity.

It is found in the nucleus. Functionally, acts as a transcriptional activator that mediates the calcium- and neuron-selective induction of BDNF exon III transcription. Binds to the consensus calcium-response element CaRE1 5'-CTATTTCGAG-3' sequence. This is Calcium-responsive transcription factor (CARF) from Homo sapiens (Human).